The primary structure comprises 106 residues: uncharacterized protein (106 aa).

The first 25 residues, 1-25, serve as a signal peptide directing secretion; sequence MSVIKKNIPAIGLCICAFFIHSAVG.

It to the N-terminal of the FimA/PapA family of fimbria proteins.

This is an uncharacterized protein from Salmonella typhi.